Reading from the N-terminus, the 963-residue chain is Protein translocase subunit SecA (963 aa).

ATP contacts are provided by residues Q87, 105-109, and D512; that span reads GEGKT. Disordered regions lie at residues 868 to 909 and 924 to 963; these read GPVM…EDFT and QFVG…CHGS. The span at 874–886 shows a compositional bias: acidic residues; sequence PDEEEDGDEDSVE. Zn(2+) contacts are provided by C949, C951, C960, and H961.

The protein belongs to the SecA family. As to quaternary structure, monomer and homodimer. Part of the essential Sec protein translocation apparatus which comprises SecA, SecYEG and auxiliary proteins SecDF. Other proteins may also be involved. The cofactor is Zn(2+).

Its subcellular location is the cell inner membrane. It localises to the cytoplasm. It catalyses the reaction ATP + H2O + cellular proteinSide 1 = ADP + phosphate + cellular proteinSide 2.. Functionally, part of the Sec protein translocase complex. Interacts with the SecYEG preprotein conducting channel. Has a central role in coupling the hydrolysis of ATP to the transfer of proteins into and across the cell membrane, serving as an ATP-driven molecular motor driving the stepwise translocation of polypeptide chains across the membrane. In Solibacter usitatus (strain Ellin6076), this protein is Protein translocase subunit SecA.